Here is a 309-residue protein sequence, read N- to C-terminus: MFSPADNIFIILITGEFILGILGNGYIALVNWIDWIKKKKISTIDYILTNLVISRICLISVMVVNGIVIAVYPDVYTKSKLQIAICTFWTFANYLNMWITTCLNVFYFLKIANSSHPLFLWLKQKIDMVVRWILLGCFAISLLVSLIAAIVLSYDYRFHAIAKHKRNITEMFHVSKRPYFEPLTLFNLFAIVPFIVSLISFFLLVRSLWRHTKQIKLYATGGRDPSTEVHVRAIKTMTSFIFLFFLYYISSILVTFSYLMTKYKLAVEFGEIVAILYPLGHSLILIVLNNKLRQTFVRMLTCRKIACVI.

Over 1–7 (MFSPADN) the chain is Extracellular. A helical transmembrane segment spans residues 8–28 (IFIILITGEFILGILGNGYIA). Residues 29 to 50 (LVNWIDWIKKKKISTIDYILTN) are Cytoplasmic-facing. Residues 51-71 (LVISRICLISVMVVNGIVIAV) form a helical membrane-spanning segment. Residues 72–82 (YPDVYTKSKLQ) lie on the Extracellular side of the membrane. The helical transmembrane segment at 83-103 (IAICTFWTFANYLNMWITTCL) threads the bilayer. The Cytoplasmic portion of the chain corresponds to 104 to 131 (NVFYFLKIANSSHPLFLWLKQKIDMVVR). The helical transmembrane segment at 132 to 152 (WILLGCFAISLLVSLIAAIVL) threads the bilayer. At 153-184 (SYDYRFHAIAKHKRNITEMFHVSKRPYFEPLT) the chain is on the extracellular side. The N-linked (GlcNAc...) asparagine glycan is linked to N167. A helical membrane pass occupies residues 185-205 (LFNLFAIVPFIVSLISFFLLV). At 206-239 (RSLWRHTKQIKLYATGGRDPSTEVHVRAIKTMTS) the chain is on the cytoplasmic side. A helical transmembrane segment spans residues 240 to 260 (FIFLFFLYYISSILVTFSYLM). At 261 to 266 (TKYKLA) the chain is on the extracellular side. The chain crosses the membrane as a helical span at residues 267-287 (VEFGEIVAILYPLGHSLILIV). At 288-309 (LNNKLRQTFVRMLTCRKIACVI) the chain is on the cytoplasmic side.

The protein belongs to the G-protein coupled receptor T2R family.

Its subcellular location is the membrane. Its function is as follows. Receptor that may play a role in the perception of bitterness and is gustducin-linked. May play a role in sensing the chemical composition of the gastrointestinal content. The activity of this receptor may stimulate alpha gustducin, mediate PLC-beta-2 activation and lead to the gating of TRPM5. The protein is Taste receptor type 2 member 8 (TAS2R8) of Gorilla gorilla gorilla (Western lowland gorilla).